The following is a 248-amino-acid chain: DNA polymerase sliding clamp (248 aa).

Belongs to the PCNA family. Homotrimer. The subunits circularize to form a toroid; DNA passes through its center. Replication factor C (RFC) is required to load the toroid on the DNA.

Sliding clamp subunit that acts as a moving platform for DNA processing. Responsible for tethering the catalytic subunit of DNA polymerase and other proteins to DNA during high-speed replication. The chain is DNA polymerase sliding clamp from Nitrosopumilus maritimus (strain SCM1).